Reading from the N-terminus, the 244-residue chain is 3-deoxy-manno-octulosonate cytidylyltransferase (244 aa).

It belongs to the KdsB family.

Its subcellular location is the cytoplasm. The enzyme catalyses 3-deoxy-alpha-D-manno-oct-2-ulosonate + CTP = CMP-3-deoxy-beta-D-manno-octulosonate + diphosphate. Its pathway is nucleotide-sugar biosynthesis; CMP-3-deoxy-D-manno-octulosonate biosynthesis; CMP-3-deoxy-D-manno-octulosonate from 3-deoxy-D-manno-octulosonate and CTP: step 1/1. The protein operates within bacterial outer membrane biogenesis; lipopolysaccharide biosynthesis. Its function is as follows. Activates KDO (a required 8-carbon sugar) for incorporation into bacterial lipopolysaccharide in Gram-negative bacteria. This is 3-deoxy-manno-octulosonate cytidylyltransferase from Synechococcus elongatus (strain ATCC 33912 / PCC 7942 / FACHB-805) (Anacystis nidulans R2).